Here is a 262-residue protein sequence, read N- to C-terminus: Histone chaperone cia1 (262 aa).

The interval 157–262 (IQWDNPDFDD…KPEEKPETSQ (106 aa)) is disordered. Coiled-coil stretches lie at residues 173–196 (DADE…EGEG) and 223–253 (KGSE…AEEK). 2 stretches are compositionally biased toward acidic residues: residues 173–219 (DADE…GEGE) and 226–242 (EEEE…EEES). A compositionally biased stretch (basic and acidic residues) spans 250–262 (AEEKPEEKPETSQ).

Belongs to the ASF1 family. Interacts with histone H3 and histone H4.

Its subcellular location is the nucleus. Histone chaperone that facilitates histone deposition and histone exchange and removal during nucleosome assembly and disassembly. The protein is Histone chaperone cia1 (cia1) of Schizosaccharomyces pombe (strain 972 / ATCC 24843) (Fission yeast).